Here is a 134-residue protein sequence, read N- to C-terminus: Histone H3.3-like type 1 (134 aa).

The tract at residues 1 to 25 is disordered; sequence MARTKHTARKSFGGKAPRKSLATKA. 2 positions are modified to N6-acetyllysine; alternate: K5 and K10. An N6-methylated lysine; alternate mark is found at K5 and K10. At S11 the chain carries Phosphoserine. Residues K15 and K24 each carry the N6-acetyllysine modification. K28 and K37 each carry N6-methylated lysine.

The protein belongs to the histone H3 family. The nucleosome is a histone octamer containing two molecules each of H2A, H2B, H3 and H4 assembled in one H3-H4 heterotetramer and two H2A-H2B heterodimers. The octamer wraps approximately 147 bp of DNA. Acetylation is generally linked to gene activation. Post-translationally, methylation at Lys-5 is linked to gene activation. Methylation at Lys-10 is linked to gene repression.

Its subcellular location is the nucleus. The protein localises to the chromosome. In terms of biological role, putative variant histone H3 which may replace conventional H3 in a subset of nucleosomes. Nucleosomes wrap and compact DNA into chromatin, limiting DNA accessibility to the cellular machineries which require DNA as a template. Histones thereby play a central role in transcription regulation, DNA repair, DNA replication and chromosomal stability. DNA accessibility is regulated via a complex set of post-translational modifications of histones, also called histone code, and nucleosome remodeling. The protein is Histone H3.3-like type 1 (his-70) of Caenorhabditis elegans.